Here is a 100-residue protein sequence, read N- to C-terminus: Urease subunit gamma (100 aa).

Belongs to the urease gamma subunit family. In terms of assembly, heterotrimer of UreA (gamma), UreB (beta) and UreC (alpha) subunits. Three heterotrimers associate to form the active enzyme.

It is found in the cytoplasm. It carries out the reaction urea + 2 H2O + H(+) = hydrogencarbonate + 2 NH4(+). Its pathway is nitrogen metabolism; urea degradation; CO(2) and NH(3) from urea (urease route): step 1/1. The polypeptide is Urease subunit gamma (Yersinia rohdei).